A 159-amino-acid polypeptide reads, in one-letter code: uncharacterized protein (159 aa).

2 disordered regions span residues 1 to 29 (MHQTHAIQRLEVLPSFSNESPTSRETSES) and 114 to 159 (TRGG…NENT). The segment covering 15–29 (SFSNESPTSRETSES) has biased composition (polar residues).

This is an uncharacterized protein from Homo sapiens (Human).